Reading from the N-terminus, the 251-residue chain is Ribosomal RNA small subunit methyltransferase J (251 aa).

S-adenosyl-L-methionine-binding positions include 100–101, 116–117, and aspartate 170; these read RD and ER.

This sequence belongs to the methyltransferase superfamily. RsmJ family.

The protein localises to the cytoplasm. It catalyses the reaction guanosine(1516) in 16S rRNA + S-adenosyl-L-methionine = N(2)-methylguanosine(1516) in 16S rRNA + S-adenosyl-L-homocysteine + H(+). Functionally, specifically methylates the guanosine in position 1516 of 16S rRNA. The sequence is that of Ribosomal RNA small subunit methyltransferase J from Haemophilus ducreyi (strain 35000HP / ATCC 700724).